The sequence spans 320 residues: Eukaryotic translation initiation factor 3 subunit G (320 aa).

The disordered stretch occupies residues 1–59; that stretch reads MPTGDFDSKPSWADQVEEEGEDDKCVTSELLKGIPLATGDTSPEPELLPGAPLPPPKEV. Phosphoserine occurs at positions 8 and 11. Residues Thr-38 and Thr-41 each carry the phosphothreonine modification. Ser-42, Ser-189, Ser-223, and Ser-264 each carry phosphoserine. The tract at residues 209-234 is disordered; sequence KTGKYVPPSLRDGASRRGESMQPNRR. The segment covering 221-234 has biased composition (basic and acidic residues); that stretch reads GASRRGESMQPNRR. Residues 239–317 enclose the RRM domain; sequence ATIRVTNLSE…LILNVEWAKP (79 aa).

In terms of assembly, component of the eukaryotic translation initiation factor 3 (eIF-3) complex, which is composed of 13 subunits: EIF3A, EIF3B, EIF3C, EIF3D, EIF3E, EIF3F, EIF3G, EIF3H, EIF3I, EIF3J, EIF3K, EIF3L and EIF3M. The eIF-3 complex appears to include 3 stable modules: module A is composed of EIF3A, EIF3B, EIF3G and EIF3I; module B is composed of EIF3F, EIF3H, and EIF3M; and module C is composed of EIF3C, EIF3D, EIF3E, EIF3K and EIF3L. EIF3C of module C binds EIF3B of module A and EIF3H of module B, thereby linking the three modules. EIF3J is a labile subunit that binds to the eIF-3 complex via EIF3B. The eIF-3 complex interacts with RPS6KB1 under conditions of nutrient depletion. Mitogenic stimulation leads to binding and activation of a complex composed of MTOR and RPTOR, leading to phosphorylation and release of RPS6KB1 and binding of EIF4B to eIF-3. Interacts (via C-terminus) with AIFM1 (via N-terminus). Interacts with DHX33; the interaction is independent of RNA. In terms of processing, phosphorylated. Phosphorylation is enhanced upon serum stimulation.

It localises to the cytoplasm. It is found in the nucleus. The protein resides in the perinuclear region. RNA-binding component of the eukaryotic translation initiation factor 3 (eIF-3) complex, which is required for several steps in the initiation of protein synthesis. The eIF-3 complex associates with the 40S ribosome and facilitates the recruitment of eIF-1, eIF-1A, eIF-2:GTP:methionyl-tRNAi and eIF-5 to form the 43S pre-initiation complex (43S PIC). The eIF-3 complex stimulates mRNA recruitment to the 43S PIC and scanning of the mRNA for AUG recognition. The eIF-3 complex is also required for disassembly and recycling of post-termination ribosomal complexes and subsequently prevents premature joining of the 40S and 60S ribosomal subunits prior to initiation. The eIF-3 complex specifically targets and initiates translation of a subset of mRNAs involved in cell proliferation, including cell cycling, differentiation and apoptosis, and uses different modes of RNA stem-loop binding to exert either translational activation or repression. This subunit can bind 18S rRNA. In terms of biological role, (Microbial infection) In case of FCV infection, plays a role in the ribosomal termination-reinitiation event leading to the translation of VP2. This is Eukaryotic translation initiation factor 3 subunit G from Homo sapiens (Human).